Reading from the N-terminus, the 653-residue chain is Fructose-1,6-bisphosphatase class 3 (653 aa).

This sequence belongs to the FBPase class 3 family. Mn(2+) is required as a cofactor.

It catalyses the reaction beta-D-fructose 1,6-bisphosphate + H2O = beta-D-fructose 6-phosphate + phosphate. It functions in the pathway carbohydrate biosynthesis; gluconeogenesis. The polypeptide is Fructose-1,6-bisphosphatase class 3 (Listeria monocytogenes serovar 1/2a (strain ATCC BAA-679 / EGD-e)).